We begin with the raw amino-acid sequence, 510 residues long: MIWHVQNENFILDSTRIFMKAFHLLLFDGSFIFPECILIFGLILLLMIDSTSDQKDMPWLYFISSTSLVMSITALLFRWREEPMISFSGNFQTNNFNEIFQFLILLCSTLCIPLSVEYIECTEMAITEFLLFVLTATLGGMFLCGANDLITIFVAPECFSLCSYLLSGYTKKDVRSNEATTKYLLMGGASSSILVHGFSWLYGSSGGEIELQEIVNGLINTQMYNSPGISIALIFITVGIGFKLSPAPSHQWTPDVYEGSPTPVVAFLSVTSKVAASASATRIFDIPFYFSSNEWHLLLEILAILSMIVGNLIAITQTSMKRMLAYSSIGQIGYVIIGIIVGDSNGGYASMITYMLFYISMNLGTFACIVLFGLRTGTDNIRDYAGLYTKDPFLALSLALCLLSLGGLPPLAGFFGKLHLFWCGWQAGLYFLVSIGLLTSVLSIYYYLKIIKLLMTGQNQEITPHVRNYRGSPLRSNNSIELSMIVCVIASTIPGISMSPIIEIAQDTLF.

A run of 13 helical transmembrane segments spans residues 24 to 44 (LLLF…GLIL), 57 to 77 (MPWL…ALLF), 99 to 119 (IFQF…VEYI), 124 to 144 (MAIT…MFLC), 149 to 169 (LITI…LSGY), 183 to 203 (YLLM…WLYG), 227 to 247 (PGIS…LSPA), 295 to 315 (WHLL…LIAI), 323 to 343 (MLAY…IVGD), 354 to 374 (YMLF…LFGL), 395 to 415 (ALSL…AGFF), 418 to 438 (LHLF…IGLL), and 482 to 502 (LSMI…SPII).

It belongs to the complex I subunit 2 family. In terms of assembly, NDH is composed of at least 16 different subunits, 5 of which are encoded in the nucleus.

The protein resides in the plastid. It localises to the chloroplast thylakoid membrane. The catalysed reaction is a plastoquinone + NADH + (n+1) H(+)(in) = a plastoquinol + NAD(+) + n H(+)(out). It catalyses the reaction a plastoquinone + NADPH + (n+1) H(+)(in) = a plastoquinol + NADP(+) + n H(+)(out). In terms of biological role, NDH shuttles electrons from NAD(P)H:plastoquinone, via FMN and iron-sulfur (Fe-S) centers, to quinones in the photosynthetic chain and possibly in a chloroplast respiratory chain. The immediate electron acceptor for the enzyme in this species is believed to be plastoquinone. Couples the redox reaction to proton translocation, and thus conserves the redox energy in a proton gradient. The sequence is that of NAD(P)H-quinone oxidoreductase subunit 2 A, chloroplastic from Populus trichocarpa (Western balsam poplar).